We begin with the raw amino-acid sequence, 610 residues long: Probable galacturonosyltransferase 5 (610 aa).

At 1–6 (MNQVRR) the chain is on the cytoplasmic side. Residues 7–27 (WQRILILSLLLLSVLAPIVFV) form a helical; Signal-anchor for type II membrane protein membrane-spanning segment. Residues 28–610 (SNRLKSITSV…PHLQRCNIHD (583 aa)) are Lumenal-facing. Over residues 86–101 (LSNSSDKSNDTVQSNE) the composition is skewed to polar residues. The interval 86-170 (LSNSSDKSND…KNTRVQLERA (85 aa)) is disordered. Residues Asn88 and Asn94 are each glycosylated (N-linked (GlcNAc...) asparagine). Residues 110–123 (EVDKGNNHKPKEEQ) show a composition bias toward basic and acidic residues. Residues 124–135 (AVSQKTTVSSNA) are compositionally biased toward polar residues. Basic and acidic residues predominate over residues 139–170 (ISARDIQLNHKTEFRPPSSKSEKNTRVQLERA). N-linked (GlcNAc...) asparagine glycosylation is found at Asn196, Asn338, Asn401, and Asn475.

Belongs to the glycosyltransferase 8 family. As to expression, expressed in roots, inflorescences, siliques, leaves and stems.

It localises to the golgi apparatus membrane. It participates in glycan metabolism; pectin biosynthesis. Its function is as follows. May be involved in pectin and/or xylans biosynthesis in cell walls. This is Probable galacturonosyltransferase 5 (GAUT5) from Arabidopsis thaliana (Mouse-ear cress).